The following is a 106-amino-acid chain: MTTSELIERINKLIDVVDKAINKREFYPPRLTKYETARIIGARALQLAMGAQPLVDIQEVGSVDPVLIAMEELRRGLLDFIIVREMPDGKTMRIRLKELLELERTL.

Belongs to the archaeal Rpo6/eukaryotic RPB6 RNA polymerase subunit family. As to quaternary structure, part of the RNA polymerase complex.

The protein localises to the cytoplasm. It catalyses the reaction RNA(n) + a ribonucleoside 5'-triphosphate = RNA(n+1) + diphosphate. Functionally, DNA-dependent RNA polymerase (RNAP) catalyzes the transcription of DNA into RNA using the four ribonucleoside triphosphates as substrates. This chain is DNA-directed RNA polymerase subunit Rpo6, found in Pyrobaculum aerophilum (strain ATCC 51768 / DSM 7523 / JCM 9630 / CIP 104966 / NBRC 100827 / IM2).